Reading from the N-terminus, the 90-residue chain is Probable Fe(2+)-trafficking protein (90 aa).

Belongs to the Fe(2+)-trafficking protein family.

In terms of biological role, could be a mediator in iron transactions between iron acquisition and iron-requiring processes, such as synthesis and/or repair of Fe-S clusters in biosynthetic enzymes. This chain is Probable Fe(2+)-trafficking protein, found in Aeromonas salmonicida (strain A449).